Consider the following 455-residue polypeptide: Argininosuccinate lyase (455 aa).

This sequence belongs to the lyase 1 family. Argininosuccinate lyase subfamily.

The protein resides in the cytoplasm. The enzyme catalyses 2-(N(omega)-L-arginino)succinate = fumarate + L-arginine. It participates in amino-acid biosynthesis; L-arginine biosynthesis; L-arginine from L-ornithine and carbamoyl phosphate: step 3/3. In Roseiflexus sp. (strain RS-1), this protein is Argininosuccinate lyase.